Reading from the N-terminus, the 236-residue chain is Small ribosomal subunit protein uS5 (236 aa).

One can recognise an S5 DRBM domain in the interval 61 to 124 (ENQEILDIAL…NYAKLNIIEI (64 aa)).

Belongs to the universal ribosomal protein uS5 family. Part of the 30S ribosomal subunit. Contacts protein S4.

Its function is as follows. With S4 and S12 plays an important role in translational accuracy. This Pyrococcus abyssi (strain GE5 / Orsay) protein is Small ribosomal subunit protein uS5.